A 95-amino-acid chain; its full sequence is Protein TusB (95 aa).

The protein belongs to the DsrH/TusB family. Heterohexamer, formed by a dimer of trimers. The hexameric TusBCD complex contains 2 copies each of TusB, TusC and TusD. The TusBCD complex interacts with TusE.

The protein localises to the cytoplasm. Functionally, part of a sulfur-relay system required for 2-thiolation of 5-methylaminomethyl-2-thiouridine (mnm(5)s(2)U) at tRNA wobble positions. The sequence is that of Protein TusB from Photorhabdus laumondii subsp. laumondii (strain DSM 15139 / CIP 105565 / TT01) (Photorhabdus luminescens subsp. laumondii).